A 556-amino-acid polypeptide reads, in one-letter code: U3 small nucleolar RNA-associated protein 18 homolog (556 aa).

The span at 1 to 24 (MPPERRRRMKLDRRTGAKPKRKPG) shows a compositional bias: basic residues. The segment at 1–70 (MPPERRRRMK…IAVAAAEEER (70 aa)) is disordered. A compositionally biased stretch (low complexity) spans 43-65 (APSSQRKPPARPSAAAAAIAVAA). Lys84 participates in a covalent cross-link: Glycyl lysine isopeptide (Lys-Gly) (interchain with G-Cter in SUMO2). Positions 111–143 (RGPRVQEHEDSGDSEVENEAKGNFPPQKKPVWV) are disordered. Phosphoserine is present on residues Ser121 and Ser124. Glycyl lysine isopeptide (Lys-Gly) (interchain with G-Cter in SUMO2) cross-links involve residues Lys183 and Lys201. The disordered stretch occupies residues 193-219 (VPAWAETTKRKTSSDDESEEDEDDLLQ). The residue at position 204 (Thr204) is a Phosphothreonine. 3 positions are modified to phosphoserine: Ser205, Ser206, and Ser210. Positions 207–216 (DDESEEDEDD) are enriched in acidic residues. Thr221 carries the phosphothreonine modification. WD repeat units lie at residues 249–288 (PTVARISSVQFHPGAQIVMVAGLDNAVSLFQVDGKTNPKI), 293–333 (LERF…LIPV), 339–380 (LKEK…GSMK), 381–419 (INGRVAASTFSSDSKKVYASSGDGEVYVWDVNSRKCLNR), 421–462 (VDEG…QETN), and 471–512 (NLVT…VFSN). Residue Lys517 forms a Glycyl lysine isopeptide (Lys-Gly) (interchain with G-Cter in SUMO2) linkage.

Belongs to the WD repeat UTP18 family. In terms of assembly, part of the small subunit (SSU) processome, composed of more than 70 proteins and the RNA chaperone small nucleolar RNA (snoRNA) U3.

Its subcellular location is the nucleus. The protein resides in the nucleolus. Its function is as follows. Part of the small subunit (SSU) processome, first precursor of the small eukaryotic ribosomal subunit. During the assembly of the SSU processome in the nucleolus, many ribosome biogenesis factors, an RNA chaperone and ribosomal proteins associate with the nascent pre-rRNA and work in concert to generate RNA folding, modifications, rearrangements and cleavage as well as targeted degradation of pre-ribosomal RNA by the RNA exosome. Involved in nucleolar processing of pre-18S ribosomal RNA. In Homo sapiens (Human), this protein is U3 small nucleolar RNA-associated protein 18 homolog.